We begin with the raw amino-acid sequence, 73 residues long: DNA-directed RNA polymerase subunit omega (73 aa).

It belongs to the RNA polymerase subunit omega family. In terms of assembly, the RNAP catalytic core consists of 2 alpha, 1 beta, 1 beta' and 1 omega subunit. When a sigma factor is associated with the core the holoenzyme is formed, which can initiate transcription.

It carries out the reaction RNA(n) + a ribonucleoside 5'-triphosphate = RNA(n+1) + diphosphate. Functionally, promotes RNA polymerase assembly. Latches the N- and C-terminal regions of the beta' subunit thereby facilitating its interaction with the beta and alpha subunits. The protein is DNA-directed RNA polymerase subunit omega of Lactobacillus delbrueckii subsp. bulgaricus (strain ATCC BAA-365 / Lb-18).